Reading from the N-terminus, the 136-residue chain is Large ribosomal subunit protein uL16 (136 aa).

This sequence belongs to the universal ribosomal protein uL16 family. In terms of assembly, part of the 50S ribosomal subunit.

Its function is as follows. Binds 23S rRNA and is also seen to make contacts with the A and possibly P site tRNAs. This chain is Large ribosomal subunit protein uL16, found in Erwinia tasmaniensis (strain DSM 17950 / CFBP 7177 / CIP 109463 / NCPPB 4357 / Et1/99).